The sequence spans 156 residues: ATP synthase subunit b (156 aa).

Residues 7–27 form a helical membrane-spanning segment; that stretch reads LFAQMVVFLILAWFTMKFVWP.

It belongs to the ATPase B chain family. As to quaternary structure, F-type ATPases have 2 components, F(1) - the catalytic core - and F(0) - the membrane proton channel. F(1) has five subunits: alpha(3), beta(3), gamma(1), delta(1), epsilon(1). F(0) has three main subunits: a(1), b(2) and c(10-14). The alpha and beta chains form an alternating ring which encloses part of the gamma chain. F(1) is attached to F(0) by a central stalk formed by the gamma and epsilon chains, while a peripheral stalk is formed by the delta and b chains.

The protein localises to the cell inner membrane. In terms of biological role, f(1)F(0) ATP synthase produces ATP from ADP in the presence of a proton or sodium gradient. F-type ATPases consist of two structural domains, F(1) containing the extramembraneous catalytic core and F(0) containing the membrane proton channel, linked together by a central stalk and a peripheral stalk. During catalysis, ATP synthesis in the catalytic domain of F(1) is coupled via a rotary mechanism of the central stalk subunits to proton translocation. Component of the F(0) channel, it forms part of the peripheral stalk, linking F(1) to F(0). In Paraburkholderia xenovorans (strain LB400), this protein is ATP synthase subunit b.